The chain runs to 271 residues: 4-diphosphocytidyl-2-C-methyl-D-erythritol kinase (271 aa).

Lys-8 is an active-site residue. 90–100 (PFGAGLGGGSA) contributes to the ATP binding site. The active site involves Asp-132.

Belongs to the GHMP kinase family. IspE subfamily.

The catalysed reaction is 4-CDP-2-C-methyl-D-erythritol + ATP = 4-CDP-2-C-methyl-D-erythritol 2-phosphate + ADP + H(+). It participates in isoprenoid biosynthesis; isopentenyl diphosphate biosynthesis via DXP pathway; isopentenyl diphosphate from 1-deoxy-D-xylulose 5-phosphate: step 3/6. Functionally, catalyzes the phosphorylation of the position 2 hydroxy group of 4-diphosphocytidyl-2C-methyl-D-erythritol. This is 4-diphosphocytidyl-2-C-methyl-D-erythritol kinase from Parabacteroides distasonis (strain ATCC 8503 / DSM 20701 / CIP 104284 / JCM 5825 / NCTC 11152).